The sequence spans 702 residues: Methionine--tRNA ligase (702 aa).

The 'HIGH' region signature appears at proline 23–histidine 33. The Zn(2+) site is built by cysteine 154, cysteine 157, cysteine 167, and cysteine 170. The short motif at lysine 341–serine 345 is the 'KMSKS' region element. Residue lysine 344 coordinates ATP. A disordered region spans residues leucine 562–proline 593. Residues alanine 569–asparagine 578 are compositionally biased toward polar residues. The region spanning aspartate 599–arginine 702 is the tRNA-binding domain.

This sequence belongs to the class-I aminoacyl-tRNA synthetase family. MetG type 1 subfamily. In terms of assembly, homodimer. The cofactor is Zn(2+).

The protein resides in the cytoplasm. It catalyses the reaction tRNA(Met) + L-methionine + ATP = L-methionyl-tRNA(Met) + AMP + diphosphate. Functionally, is required not only for elongation of protein synthesis but also for the initiation of all mRNA translation through initiator tRNA(fMet) aminoacylation. The protein is Methionine--tRNA ligase of Xylella fastidiosa (strain M12).